We begin with the raw amino-acid sequence, 361 residues long: Hydroxyproline O-arabinosyltransferase PLENTY (361 aa).

The helical; Signal-anchor transmembrane segment at 13–33 (LLMLLMVLGFFFATYNLVSMI) threads the bilayer.

It is found in the golgi apparatus membrane. It carries out the reaction trans-4-hydroxy-L-prolyl-[protein] + UDP-beta-L-arabinofuranose = O-(beta-L-arabinofuranosyl)-trans-4-hydroxy-L-prolyl-[protein] + UDP + H(+). Functionally, glycosyltransferase involved in the O-arabinosylation of several proteins including extensins and small signaling peptides. Catalyzes the transfer of the initial L-arabinose to the hydroxyl group of Hyp residues. Probably involved in the arabinosylation of CLAVATA3/ESR-related (CLE) signaling peptides that move from root to shoot, to interact with receptor kinase signaling that regulates nodulation. Involved in long distance nodulation signaling events. Involved in the autoregulation of nodulation (AON), a long distance systemic signaling from root to shoot and back again, which allows legumes to limit the number of root nodules formed based on available nitrogen and previous rhizobial colonization. The sequence is that of Hydroxyproline O-arabinosyltransferase PLENTY from Lotus japonicus (Lotus corniculatus var. japonicus).